A 314-amino-acid chain; its full sequence is Ribosomal protein L11 methyltransferase (314 aa).

S-adenosyl-L-methionine is bound by residues Thr152, Gly184, Asp206, and Asn248.

This sequence belongs to the methyltransferase superfamily. PrmA family.

It localises to the cytoplasm. The enzyme catalyses L-lysyl-[protein] + 3 S-adenosyl-L-methionine = N(6),N(6),N(6)-trimethyl-L-lysyl-[protein] + 3 S-adenosyl-L-homocysteine + 3 H(+). In terms of biological role, methylates ribosomal protein L11. In Geotalea daltonii (strain DSM 22248 / JCM 15807 / FRC-32) (Geobacter daltonii), this protein is Ribosomal protein L11 methyltransferase.